A 391-amino-acid polypeptide reads, in one-letter code: Rhizopuspepsin-2 (391 aa).

Residues 1 to 21 form the signal peptide; the sequence is MKLTLISSCVALAFMALATEA. Positions 22–68 are cleaved as a propeptide — activation peptide; that stretch reads APSGKKLSIPLTKNTNYKPSAKNAIQKALAKYHRFRTTSSSNSTSTE. Positions 84–388 constitute a Peptidase A1 domain; sequence YYGKVTVGTP…NQEVPEVQIA (305 aa). Aspartate 102 is a catalytic residue. Residues cysteine 115 and cysteine 118 are joined by a disulfide bond. Residue aspartate 285 is part of the active site. A disulfide bridge connects residues cysteine 319 and cysteine 352.

This sequence belongs to the peptidase A1 family.

The enzyme catalyses Hydrolysis of proteins with broad specificity similar to that of pepsin A, preferring hydrophobic residues at P1 and P1'. Clots milk and activates trypsinogen. Does not cleave 4-Gln-|-His-5, but does cleave 10-His-|-Leu-11 and 12-Val-|-Glu-13 in B chain of insulin.. The chain is Rhizopuspepsin-2 from Rhizopus niveus.